Consider the following 60-residue polypeptide: Three-finger toxin Mnn I (60 aa).

Disulfide bonds link Cys-3–Cys-22, Cys-17–Cys-39, Cys-41–Cys-52, and Cys-53–Cys-58.

It belongs to the three-finger toxin family. Short-chain subfamily. Type I alpha-neurotoxin sub-subfamily. As to expression, expressed by the venom gland.

The protein localises to the secreted. Binds to muscle nicotinic acetylcholine receptor (nAChR) and inhibit acetylcholine from binding to the receptor, thereby impairing neuromuscular transmission. This is Three-finger toxin Mnn I from Micrurus nigrocinctus (Central American coral snake).